A 335-amino-acid polypeptide reads, in one-letter code: MDASSSSAPDLADAYDIPWVEKYRPTRVADVGGNSDAVARLQDIARDGNMPNLILSGPPGTGKTTSILSLAHELLGPSYREAVLELNASDDRGLDVVRNKIKMFAQKKVTLQPGRHKIVILDEADSMTSGAQQALRRTMEIYSNTTRFALACNTSSKIIEPIQSRCAIVRFSRLSDQEILGRLMIVVAAEKVPYVPEGLEAIIFTADGDMRQALNNLQATVSGFRFVNQENVFKVCDQPHPLHVKNMVKNVLDGKFDEACSALKQLYDLGYSPTDIITTLFRVIKNYDMAEYLKLELLKETGFAHMRICDGVGSFLQLSGLLAKFALVRETAKAS.

An ATP-binding site is contributed by Ser-56–Lys-63.

It belongs to the activator 1 small subunits family. Heterotetramer of subunits RFC2, RFC3, RFC4 and RFC5 that can form a complex with RFC1. As to expression, expressed in roots, leaves, shoot apical meristem (SAM), flag leaves and panicles.

It localises to the nucleus. In terms of biological role, may be involved in DNA replication and thus regulate cell proliferation. The sequence is that of Replication factor C subunit 4 (RFC4) from Oryza sativa subsp. japonica (Rice).